The following is a 523-amino-acid chain: Flavin-dependent halogenase armH5 (523 aa).

Positions 17, 20, and 50 each coordinate FAD. 2 residues coordinate chloride: Ser328 and Gly329. Val330 is a binding site for FAD.

Belongs to the flavin-dependent halogenase family.

The enzyme catalyses melleolide F + FADH2 + chloride + O2 = 6'-chloromelleolide F + FAD + 2 H2O + H(+). Functionally, flavin-dependent halogenase involved in the biosynthesis of melleolides, a range of antifungal and phytotoxic polyketide derivatives composed of an orsellinic acid (OA) moiety esterified to various sesquiterpene alcohols. The halogenase catalyzes the transfer of a single chlorine atom to the melleolide backbone, resulting in a 6'-chloromelleolide product. The enzyme acts on free substrate and does not depend on carrier-protein-dependent acceptor molecules. In Armillaria mellea (Honey mushroom), this protein is Flavin-dependent halogenase armH5.